The chain runs to 183 residues: Ribosome-recycling factor (183 aa).

The protein belongs to the RRF family.

Its subcellular location is the cytoplasm. Its function is as follows. Responsible for the release of ribosomes from messenger RNA at the termination of protein biosynthesis. May increase the efficiency of translation by recycling ribosomes from one round of translation to another. The polypeptide is Ribosome-recycling factor (Buchnera aphidicola subsp. Baizongia pistaciae (strain Bp)).